The primary structure comprises 622 residues: SLAIN motif-containing protein-like (622 aa).

Residues 34-60 are a coiled coil; that stretch reads DLKEVQKLHELVKRLEIQNQQLKIKRN. Disordered regions lie at residues 404-441 and 473-622; these read HRYSPSPLSSPRCQSPSAAESRATTSRIRPPRRSIQNH and VRSS…DGCY. Residues 405–415 are compositionally biased toward low complexity; it reads RYSPSPLSSPR. 4 stretches are compositionally biased toward polar residues: residues 416-430, 484-502, 525-591, and 599-611; these read CQSPSAAESRATTSR, QGPSSRLTRMQQPSTSTPP, VSTS…STVP, and SRRSLSSAKMNST.

This sequence belongs to the SLAIN motif-containing family.

The chain is SLAIN motif-containing protein-like from Xenopus tropicalis (Western clawed frog).